The sequence spans 348 residues: MTEYKNIIVTGGAGFIGSNFVHYVYNNHPDVHVTVLDKLTYAGNRANLEEILGDRVELVVGDIADSELVDKLAAKADAIVHYAAESHNDNSLKDPSPFIYTNFVGTYILLEAARKYDIRFHHVSTDEVYGDLPLREDLPGHGEGPGEKFTAETKYNPSSPYSSTKAASDLIVKAWVRSFGVKATISNCSNNYGPYQHIEKFIPRQITNILSGIKPKLYGEGKNVRDWIHTNDHSTGVWAILTKGRIGETYLIGADGEKNNKEVLELILEKMSQPKNAYDHVTDRAGHDLRYAIDSTKLREELGWKPQFTNFEEGLEDTIKWYTEHEDWWKAEKEAVEANYAKTQKILN.

Residues 15–16 (FI), 37–40 (DKLT), 62–63 (DI), and 82–86 (YAAES) contribute to the NAD(+) site. Substrate contacts are provided by Ser-86 and Asn-88. Thr-101 contacts NAD(+). A substrate-binding site is contributed by Thr-125. Residue Asp-126 is the Proton donor of the active site. Active-site proton acceptor residues include Glu-127 and Tyr-161. An NAD(+)-binding site is contributed by 161 to 165 (YSSTK). Asn-190 provides a ligand contact to substrate. Residue Asn-191 coordinates NAD(+). Residues 200 to 205 (KFIPRQ), 216 to 218 (KLY), Arg-225, Asn-260, and 283 to 287 (DRAGH) each bind substrate.

It belongs to the NAD(P)-dependent epimerase/dehydratase family. dTDP-glucose dehydratase subfamily. Homodimer. The cofactor is NAD(+).

It carries out the reaction dTDP-alpha-D-glucose = dTDP-4-dehydro-6-deoxy-alpha-D-glucose + H2O. The protein operates within carbohydrate biosynthesis; dTDP-L-rhamnose biosynthesis. Functionally, catalyzes the dehydration of dTDP-D-glucose to form dTDP-6-deoxy-D-xylo-4-hexulose via a three-step process involving oxidation, dehydration and reduction. The chain is dTDP-glucose 4,6-dehydratase (rmlB) from Streptococcus mutans serotype c (strain ATCC 700610 / UA159).